Consider the following 382-residue polypeptide: MTGKPSIAALIVAAGQGVRSGGGVPKQYRRIGGKAVLAHAVDALARHPAIGSVQVVIGAGQEDLHAEAVGGRTLPPPVTGGATRRDSVIAGLAAVDADIVLIHDAARPFLPAAVIDRLIAALDGSDGAVPALAVADTLAKGDALLGDAVPRDGLHRVQTPQAFRRADILAAHRAWDPAREATDDAQVARAHGLSVAIVEGDRSLEKLTFAADFEAAEERMAMISRTAMGFDVHGFTAGDGVQLGGVRIAHDRALAGHSDADVALHALTDALLGTIAAGDIGSHFPPSDQRWKGADSAMFLAHARDLVAAAGGIVDFVDLTIICEAPKVGPHRAAIRDRIAALLGLTAGQVSVKATTTERLGFTGRREGIAAQAVATVRVPSI.

The segment at 1 to 225 is 2-C-methyl-D-erythritol 4-phosphate cytidylyltransferase; that stretch reads MTGKPSIAAL…AEERMAMISR (225 aa). The 2-C-methyl-D-erythritol 2,4-cyclodiphosphate synthase stretch occupies residues 225-382; the sequence is RTAMGFDVHG…AVATVRVPSI (158 aa). 2 residues coordinate a divalent metal cation: aspartate 231 and histidine 233. Residues 231–233 and 257–258 each bind 4-CDP-2-C-methyl-D-erythritol 2-phosphate; these read DVH and HS. Histidine 265 is a binding site for a divalent metal cation. 4-CDP-2-C-methyl-D-erythritol 2-phosphate contacts are provided by residues 279–281, 355–358, phenylalanine 362, and arginine 365; these read DIG and TTTE.

The protein in the N-terminal section; belongs to the IspD/TarI cytidylyltransferase family. IspD subfamily. This sequence in the C-terminal section; belongs to the IspF family. Requires a divalent metal cation as cofactor.

It catalyses the reaction 2-C-methyl-D-erythritol 4-phosphate + CTP + H(+) = 4-CDP-2-C-methyl-D-erythritol + diphosphate. The catalysed reaction is 4-CDP-2-C-methyl-D-erythritol 2-phosphate = 2-C-methyl-D-erythritol 2,4-cyclic diphosphate + CMP. It participates in isoprenoid biosynthesis; isopentenyl diphosphate biosynthesis via DXP pathway; isopentenyl diphosphate from 1-deoxy-D-xylulose 5-phosphate: step 2/6. Its pathway is isoprenoid biosynthesis; isopentenyl diphosphate biosynthesis via DXP pathway; isopentenyl diphosphate from 1-deoxy-D-xylulose 5-phosphate: step 4/6. In terms of biological role, bifunctional enzyme that catalyzes the formation of 4-diphosphocytidyl-2-C-methyl-D-erythritol from CTP and 2-C-methyl-D-erythritol 4-phosphate (MEP) (IspD), and catalyzes the conversion of 4-diphosphocytidyl-2-C-methyl-D-erythritol 2-phosphate (CDP-ME2P) to 2-C-methyl-D-erythritol 2,4-cyclodiphosphate (ME-CPP) with a corresponding release of cytidine 5-monophosphate (CMP) (IspF). The polypeptide is Bifunctional enzyme IspD/IspF (Rhizorhabdus wittichii (strain DSM 6014 / CCUG 31198 / JCM 15750 / NBRC 105917 / EY 4224 / RW1) (Sphingomonas wittichii)).